The following is a 1292-amino-acid chain: Epidermal growth factor receptor (1292 aa).

The Extracellular portion of the chain corresponds to 1–641 (MYNNYNLCHI…AGLIENELQP (641 aa)). 7 N-linked (GlcNAc...) asparagine glycosylation sites follow: asparagine 31, asparagine 224, asparagine 263, asparagine 323, asparagine 342, asparagine 600, and asparagine 605. Residues 642-662 (AILAGVAVFALAFLVVAAIIM) traverse the membrane as a helical segment. The Cytoplasmic portion of the chain corresponds to 663–1292 (YFWRVRAKAK…KPLRKNETTV (630 aa)). Threonine 675 is modified (phosphothreonine; by PKC). A Protein kinase domain is found at 711-978 (MRKGGILGYG…KMSRDPGRYL (268 aa)). Residues 717–725 (LGYGAFGNV) and lysine 744 contribute to the ATP site. The Proton acceptor role is filled by aspartate 836. Positions 1022-1066 (PKSRAPIPPGLSASSTSGSPPNTPVKPCWPNGKPLAADSPTPQNQ) are disordered. Tyrosine 1166 carries the phosphotyrosine; by autocatalysis modification. The disordered stretch occupies residues 1253–1292 (SQVRQRSSEEESDHEYYNDFDRLERELQPLKPLRKNETTV). Positions 1258-1292 (RSSEEESDHEYYNDFDRLERELQPLKPLRKNETTV) are enriched in basic and acidic residues.

Belongs to the protein kinase superfamily. Tyr protein kinase family. EGF receptor subfamily.

It is found in the membrane. It catalyses the reaction L-tyrosyl-[protein] + ATP = O-phospho-L-tyrosyl-[protein] + ADP + H(+). Activated by MRJP1 during queen determination of honeybee larvae. Its function is as follows. Upon binding to its ligands, transduces the signal through the ras-raf-MAPK pathway and is involved in a myriad of developmental decisions. Involved in the determination of adult size, ovary development, and development timing, especially during queen determination of honeybee larvae. May have an important role in the prolongation of longevity in queens. The protein is Epidermal growth factor receptor (Egfr) of Apis mellifera (Honeybee).